The following is a 427-amino-acid chain: Pseudouridylate synthase 1 homolog (427 aa).

Residues 20 to 83 (GPRPSCSPRM…DEERREKPPK (64 aa)) form a disordered region. Residues 44-79 (QDRRSCSGRAGGDRVWEDGEHPAKKLKSGGDEERRE) show a composition bias toward basic and acidic residues. The active-site Nucleophile is Asp-146. The disordered stretch occupies residues 407-427 (GGTGAKVPSPLEGSEGDGDTD). Phosphoserine is present on residues Ser-415 and Ser-420. Thr-426 bears the Phosphothreonine mark.

It belongs to the tRNA pseudouridine synthase TruA family. As to quaternary structure, monomer. Forms a complex with RARG and the SRA1 RNA in the nucleus. As to expression, widely expressed. High levels of expression found in brain and skeletal muscle.

It is found in the mitochondrion. The protein resides in the nucleus. Its subcellular location is the cytoplasm. The catalysed reaction is a uridine in tRNA = a pseudouridine in tRNA. It catalyses the reaction uridine(38/39/40) in tRNA = pseudouridine(38/39/40) in tRNA. The enzyme catalyses a uridine in mRNA = a pseudouridine in mRNA. In terms of biological role, pseudouridylate synthase that catalyzes pseudouridylation of tRNAs and mRNAs. Acts on positions 27/28 in the anticodon stem and also positions 34 and 36 in the anticodon of an intron containing tRNA. Also catalyzes pseudouridylation of mRNAs: mediates pseudouridylation of mRNAs with the consensus sequence 5'-UGUAG-3'. Acts as a regulator of pre-mRNA splicing by mediating pseudouridylation of pre-mRNAs at locations associated with alternatively spliced regions. Pseudouridylation of pre-mRNAs near splice sites directly regulates mRNA splicing and mRNA 3'-end processing. Involved in regulation of nuclear receptor activity through pseudouridylation of SRA1 mRNA. The chain is Pseudouridylate synthase 1 homolog from Homo sapiens (Human).